We begin with the raw amino-acid sequence, 216 residues long: MSSIEWRVSEGLTDYEYARSEMTKRVADIANQEASEMLWFLQHPPLYTAGSSADRRELLMPDRFPVYPAERGGRYTYHGPGQRIGYLMMDIRKHGNDIRRFVHSIEKWVIESLAEFGVTAYSHPERIGIWVDTPDGEAKIGAIGIRVRRWISFHGFSLNICPDLEHFSGIIPCGISEFGVTSLHALGKKVSMSDVDQALADRFPYFLEALQSKEAF.

Residues 32–211 (QEASEMLWFL…RFPYFLEALQ (180 aa)) enclose the BPL/LPL catalytic domain. Residues 71 to 78 (RGGRYTYH), 142 to 144 (AIG), and 155 to 157 (GFS) each bind substrate. Cysteine 173 functions as the Acyl-thioester intermediate in the catalytic mechanism.

This sequence belongs to the LipB family.

The protein localises to the cytoplasm. It catalyses the reaction octanoyl-[ACP] + L-lysyl-[protein] = N(6)-octanoyl-L-lysyl-[protein] + holo-[ACP] + H(+). Its pathway is protein modification; protein lipoylation via endogenous pathway; protein N(6)-(lipoyl)lysine from octanoyl-[acyl-carrier-protein]: step 1/2. Functionally, catalyzes the transfer of endogenously produced octanoic acid from octanoyl-acyl-carrier-protein onto the lipoyl domains of lipoate-dependent enzymes. Lipoyl-ACP can also act as a substrate although octanoyl-ACP is likely to be the physiological substrate. The protein is Octanoyltransferase of Zymomonas mobilis subsp. mobilis (strain ATCC 31821 / ZM4 / CP4).